The chain runs to 214 residues: Heat shock protein 26 (214 aa).

The residue at position 2 (Ser2) is an N-acetylserine. Thr42 carries the post-translational modification Phosphothreonine. The 122-residue stretch at 86–207 (GFPRSVAVPV…KNHVKKIEVS (122 aa)) folds into the sHSP domain. Position 90 is a phosphoserine (Ser90). Position 163 is a phosphothreonine (Thr163). The tract at residues 192-214 (KPQKDGKNHVKKIEVSSQESWGN) is disordered. Positions 193-205 (PQKDGKNHVKKIE) are enriched in basic and acidic residues. Phosphoserine occurs at positions 208 and 211.

Belongs to the small heat shock protein (HSP20) family. In terms of assembly, present in large complexes.

Not known. One of the major polypeptides produced on heat shock. This Saccharomyces cerevisiae (strain ATCC 204508 / S288c) (Baker's yeast) protein is Heat shock protein 26 (HSP26).